A 1370-amino-acid polypeptide reads, in one-letter code: DNA-directed RNA polymerase subunit beta (1370 aa).

The protein belongs to the RNA polymerase beta chain family. The RNAP catalytic core consists of 2 alpha, 1 beta, 1 beta' and 1 omega subunit. When a sigma factor is associated with the core the holoenzyme is formed, which can initiate transcription.

It catalyses the reaction RNA(n) + a ribonucleoside 5'-triphosphate = RNA(n+1) + diphosphate. Its function is as follows. DNA-dependent RNA polymerase catalyzes the transcription of DNA into RNA using the four ribonucleoside triphosphates as substrates. The protein is DNA-directed RNA polymerase subunit beta of Albidiferax ferrireducens (strain ATCC BAA-621 / DSM 15236 / T118) (Rhodoferax ferrireducens).